A 329-amino-acid polypeptide reads, in one-letter code: Carbonic anhydrase (329 aa).

The chloroplast transit peptide-like stretch occupies residues 1–108 (MSTASAFAIN…AAARIDQITA (108 aa)).

This sequence belongs to the beta-class carbonic anhydrase family. In terms of assembly, homohexamer.

It is found in the cytoplasm. The catalysed reaction is hydrogencarbonate + H(+) = CO2 + H2O. In terms of biological role, reversible hydration of carbon dioxide. This Flaveria pringlei protein is Carbonic anhydrase.